The following is a 442-amino-acid chain: Putative neutral sphingomyelinase (442 aa).

Glu-46 serves as a coordination point for Mg(2+). His-264 serves as the catalytic Proton acceptor. Positions Ala-309 to Ser-330 are disordered. Over residues Ser-318–Ser-330 the composition is skewed to polar residues. 2 helical membrane passes run Arg-362–Ala-384 and Ile-391–Trp-413.

Belongs to the neutral sphingomyelinase family.

The protein resides in the membrane. The catalysed reaction is a sphingomyelin + H2O = phosphocholine + an N-acylsphing-4-enine + H(+). The protein operates within lipid metabolism; sphingolipid metabolism. This chain is Putative neutral sphingomyelinase, found in Drosophila melanogaster (Fruit fly).